Here is a 229-residue protein sequence, read N- to C-terminus: Urease accessory protein UreF (229 aa).

It belongs to the UreF family. In terms of assembly, ureD, UreF and UreG form a complex that acts as a GTP-hydrolysis-dependent molecular chaperone, activating the urease apoprotein by helping to assemble the nickel containing metallocenter of UreC. The UreE protein probably delivers the nickel.

The protein localises to the cytoplasm. Functionally, required for maturation of urease via the functional incorporation of the urease nickel metallocenter. This chain is Urease accessory protein UreF, found in Ralstonia pickettii (strain 12J).